The following is a 202-amino-acid chain: PXMP2/4 family protein 1 (202 aa).

The next 4 helical transmembrane spans lie at 21-41, 54-72, 138-154, and 161-177; these read PVIT…TLAQ, LMMC…HFWF, KAWM…FRFV, and LISN…LSTV.

This sequence belongs to the peroxisomal membrane protein PXMP2/4 family.

Its subcellular location is the membrane. The chain is PXMP2/4 family protein 1 from Dictyostelium discoideum (Social amoeba).